We begin with the raw amino-acid sequence, 220 residues long: Nucleolar protein 3 (220 aa).

Residue Gly-2 is the site of N-myristoyl glycine attachment. The CARD domain maps to 4–95 (VQERPSETID…MPDPAWDWQH (92 aa)). The essential for interaction with BAX stretch occupies residues 20–70 (VETLQADSGLLLDALVARGVLTGPEYEALDALPDAERRVRRLLLLVQSKGE). Residues 111 to 220 (GHWTPEAPSS…FQEEDESEDS (110 aa)) are disordered. At Thr-149 the chain carries Phosphothreonine; by CK2. Residues 152-220 (EPELEAEATE…FQEEDESEDS (69 aa)) show a composition bias toward acidic residues.

Oligomerizes (via CARD doamin). Interacts (via CARD domain) with CASP2; inhibits CASP2 activity in a phosphorylation-dependent manner. Interacts with CASP8; decreases CASP8 activity in a mitochondria localization- and phosphorylation-dependent manner and this interaction is dissociated by calcium. Interacts with TFPT; translocates NOL3 into the nucleus and negatively regulated TFPT-induced cell death. Interacts directly (via CARD domain) with FAS and FADD (via DED domain); inhibits death-inducing signaling complex (DISC) assembly by inhibiting the increase in FAS-FADD binding induced by FAS activation. Interacts (via CARD domain) with BAX (via a C-terminal 33 residues); inhibits BAX activation and translocation and consequently cytochrome c release from mitochondria. Interacts with PPM1G; may dephosphorylate NOL3. Interacts (via CARD domain) with BBC3 (via BH3 domain); preventing the association of BBC3 with BCL2 and resulting in activation of CASP8. Interacts (via CARD domain) with BAD(via BH3 domain); preventing the association of BAD with BCL2. Interacts directly (via CARD domain) with TNFRSF1A; inhibits TNF-signaling pathway. In terms of processing, phosphorylation at Thr-149 is required for its antiapoptotic effect by blocking death-inducing signaling complex death-inducing signaling complex (DISC) activity through the control of interaction with CASP8. Phosphorylation at Thr-149 results in translocation to mitochondria and this translocation enables the binding to CASP8. Dephosphorylated at Thr-149 by calcineurin; doesn't inhibit the association between FADD and CASP8 and the consequent apoptosis. Polyubiquitinated by MDM2; promoting proteasomal-dependent degradation in response to apoptotic stimuli.

Its subcellular location is the cytoplasm. It localises to the mitochondrion. The protein resides in the sarcoplasmic reticulum. It is found in the membrane. Functionally, apoptosis repressor that blocks multiple modes of cell death. Inhibits extrinsic apoptotic pathways through two different ways. Firstly by interacting with FAS and FADD upon FAS activation blocking death-inducing signaling complex (DISC) assembly. Secondly by interacting with CASP8 in a mitochondria localization- and phosphorylation-dependent manner, limiting the amount of soluble CASP8 available for DISC-mediated activation. Inhibits intrinsic apoptotic pathway in response to a wide range of stresses, through its interaction with BAX resulting in BAX inactivation, preventing mitochondrial dysfunction and release of pro-apoptotic factors. Inhibits calcium-mediated cell death by functioning as a cytosolic calcium buffer, dissociating its interaction with CASP8 and maintaining calcium homeostasis. Negatively regulates oxidative stress-induced apoptosis by phosphorylation-dependent suppression of the mitochondria-mediated intrinsic pathway, by blocking CASP2 activation and BAX translocation. Negatively regulates hypoxia-induced apoptosis in part by inhibiting the release of cytochrome c from mitochondria in a caspase-independent manner. Also inhibits TNF-induced necrosis by preventing TNF-signaling pathway through TNFRSF1A interaction abrogating the recruitment of RIPK1 to complex I. Finally through its role as apoptosis repressor, promotes vascular remodeling through inhibition of apoptosis and stimulation of proliferation, in response to hypoxia. Inhibits too myoblast differentiation through caspase inhibition. This is Nucleolar protein 3 (Nol3) from Mus musculus (Mouse).